A 393-amino-acid polypeptide reads, in one-letter code: Stearoyl-[acyl-carrier-protein] 9-desaturase, chloroplastic (393 aa).

Residues 1 to 31 constitute a chloroplast transit peptide; it reads MASMVAFRPEAFLCFSPPKTTRSTRSPRISM. Glutamate 135, glutamate 173, histidine 176, glutamate 226, glutamate 259, and histidine 262 together coordinate Fe cation.

The protein belongs to the fatty acid desaturase type 2 family. Homodimer. The cofactor is Fe(2+).

The protein localises to the plastid. It is found in the chloroplast. It carries out the reaction octadecanoyl-[ACP] + 2 reduced [2Fe-2S]-[ferredoxin] + O2 + 2 H(+) = (9Z)-octadecenoyl-[ACP] + 2 oxidized [2Fe-2S]-[ferredoxin] + 2 H2O. It participates in lipid metabolism; fatty acid metabolism. Converts stearoyl-ACP to oleoyl-ACP by introduction of a cis double bond between carbons 9 and 10 of the acyl chain. In Elaeis guineensis var. tenera (Oil palm), this protein is Stearoyl-[acyl-carrier-protein] 9-desaturase, chloroplastic.